Consider the following 91-residue polypeptide: Probable Fe(2+)-trafficking protein (91 aa).

The protein belongs to the Fe(2+)-trafficking protein family.

In terms of biological role, could be a mediator in iron transactions between iron acquisition and iron-requiring processes, such as synthesis and/or repair of Fe-S clusters in biosynthetic enzymes. The protein is Probable Fe(2+)-trafficking protein of Mannheimia succiniciproducens (strain KCTC 0769BP / MBEL55E).